The chain runs to 1301 residues: MADATSTPSIDFSKIQSVIEAPDLLKVQLDSFHNFIQDSVPLAKRREQGLEKVLRSAFPITDTRGLYLLEYISYSFDKPKYTVEDCIERGLTYDVSLKVKLKLSYKDEADETDWKETIQQEVYLGRIPYMTERGTFIVNGAERVVVAQLHRSPGVVFSEAVHPNGKKMYSAKIVPTRGSWIEFQTDINNQIFVYIDQKKNFLVTALLRAIGFTRDEDILGLFDLVEEVPMKAAKRERLVGQYLASDIVDMQTGEVVSARTAITEEVFEQIQAAGYKSVKIMKSFNGSDKGQDKSIVINTILNDSSATEEEALEIVYEELRANEAPDIDAARSFLERTFFNQKKYDLGEVGRYRIGKKLSREFSEMDEYLGGKGELKQLSDTIHQKILQTIQSFSDEPIGEEVLVLTHLDIIAVINYLIKLVNGQAEVDDVDHLANRRVRSVGEQLAAQFVIGLARMGKNVREKLNSRDSDKIAPADLINARTVSSVVSSFFATSQLSQFMDQTNPLAEMTNKRRVSALGPGGLTRERAGFEVRDVHYTHYGRLCPIETPEGPNIGLISSLSVYAEINDKGFIQTPYRVVEKGHVTDTVVMLSAEDEENKITVPVSIPIDANNNIAVESVQARTKGDYPLVPSEDVNYMDVSPVQIVSAAAALIPFLEHDDGNRALMGANMQRQAVPLLVSEAPVVGTGMEAKVARDSRSVILGEGPGFVEEVTSEFIKVRYDIDTENNEHMSLLDPDEGLKTYRMIKFKRSNQDTCISQRPIVKNGQKVDKGTVLADSSSTEDGELALGKNVLVAFMPWRGYNFEDAIILSERLVYDDVFTSIHVHEFEANVRDTKRGEEQFTRDIYNVSDEALRNLDENGIVRIGAEVKERDILVGKITPKGESDPTPEEKLLRAIFGDKSSDVKDASMHVPAGMKGIVIKTKLFSRKKKVGMDVKEKLELIDARFERREIELRKSFEKWLRQMLQGKKVKGLTSDKGKVLADEGAAFDDALLAKFSSQPFLESIDFTLGVTGTKKVDEAVIRLVKEFRFKLKDLADERDNEKYKVNVGDELPPGIEELAKVYIAQKRKIQVGDKMAGRHGNKGVVGKILPIEDMPFMADGTPVDIVLNPLGVPSRMNIGQLYETSLGWAAKKLGVKFKTPIFNGATYEEVQAELERAGLPMHGKVRLYDGRTGEQFDDEVTVGYIYMLKLSHLVDDKIHARSTGPYSLITQQPLGGKAQFGGQRFGEMEVWALEAYGAANILREMLTVKSDDVVGRNKTYEAIVKGQNLPEPGIPESFNVLIRELQGLGLEIRIDDRVP.

This sequence belongs to the RNA polymerase beta chain family. In terms of assembly, the RNAP catalytic core consists of 2 alpha, 1 beta, 1 beta' and 1 omega subunit. When a sigma factor is associated with the core the holoenzyme is formed, which can initiate transcription.

It catalyses the reaction RNA(n) + a ribonucleoside 5'-triphosphate = RNA(n+1) + diphosphate. Functionally, DNA-dependent RNA polymerase catalyzes the transcription of DNA into RNA using the four ribonucleoside triphosphates as substrates. In Chlorobium luteolum (strain DSM 273 / BCRC 81028 / 2530) (Pelodictyon luteolum), this protein is DNA-directed RNA polymerase subunit beta.